We begin with the raw amino-acid sequence, 179 residues long: Putative invertase inhibitor (179 aa).

Positions 1–23 are cleaved as a signal peptide; that stretch reads MKLSFSLCIFFFNLLLLLQAVIS. 2 disulfides stabilise this stretch: C31–C46 and C102–C142.

Belongs to the PMEI family. In terms of assembly, monomer. Post-translationally, not glycosylated. Expressed in pollen (at protein level). Expressed in stem, but not leaves (at protein level). Expressed in pollen.

It localises to the secreted. The protein localises to the cell wall. Its subcellular location is the endoplasmic reticulum. Its function is as follows. Invertase inhibitor. This is Putative invertase inhibitor from Platanus acerifolia (London plane tree).